The chain runs to 902 residues: Glycogen phosphorylase (902 aa).

The tract at residues 1 to 21 is disordered; that stretch reads MPPASTSTTNDMITEEPTSPH. Thr31 is modified (phosphothreonine). Ser333 is subject to Phosphoserine. Position 751 is an N6-(pyridoxal phosphate)lysine (Lys751).

The protein belongs to the glycogen phosphorylase family. In terms of assembly, homodimer. Pyridoxal 5'-phosphate serves as cofactor.

It localises to the cytoplasm. The protein localises to the cytosol. It catalyses the reaction [(1-&gt;4)-alpha-D-glucosyl](n) + phosphate = [(1-&gt;4)-alpha-D-glucosyl](n-1) + alpha-D-glucose 1-phosphate. With respect to regulation, activated by phosphorylation of Thr-31. Its function is as follows. Phosphorylase is an important allosteric enzyme in carbohydrate metabolism. Enzymes from different sources differ in their regulatory mechanisms and in their natural substrates. However, all known phosphorylases share catalytic and structural properties. The polypeptide is Glycogen phosphorylase (GPH1) (Saccharomyces cerevisiae (strain ATCC 204508 / S288c) (Baker's yeast)).